The chain runs to 151 residues: Regulatory protein RecX (151 aa).

The protein belongs to the RecX family.

It is found in the cytoplasm. Modulates RecA activity. The protein is Regulatory protein RecX of Prosthecochloris aestuarii (strain DSM 271 / SK 413).